Reading from the N-terminus, the 151-residue chain is D-aminoacyl-tRNA deacylase (151 aa).

The Gly-cisPro motif, important for rejection of L-amino acids signature appears at 137-138 (GP).

The protein belongs to the DTD family. Homodimer.

The protein localises to the cytoplasm. The enzyme catalyses glycyl-tRNA(Ala) + H2O = tRNA(Ala) + glycine + H(+). It catalyses the reaction a D-aminoacyl-tRNA + H2O = a tRNA + a D-alpha-amino acid + H(+). Functionally, an aminoacyl-tRNA editing enzyme that deacylates mischarged D-aminoacyl-tRNAs. Also deacylates mischarged glycyl-tRNA(Ala), protecting cells against glycine mischarging by AlaRS. Acts via tRNA-based rather than protein-based catalysis; rejects L-amino acids rather than detecting D-amino acids in the active site. By recycling D-aminoacyl-tRNA to D-amino acids and free tRNA molecules, this enzyme counteracts the toxicity associated with the formation of D-aminoacyl-tRNA entities in vivo and helps enforce protein L-homochirality. This Fusobacterium nucleatum subsp. nucleatum (strain ATCC 25586 / DSM 15643 / BCRC 10681 / CIP 101130 / JCM 8532 / KCTC 2640 / LMG 13131 / VPI 4355) protein is D-aminoacyl-tRNA deacylase.